The following is a 252-amino-acid chain: Major prion protein (252 aa).

Residues 1-22 form the signal peptide; sequence MANLGYWMLVLFVATWSDLGLC. The interval 23 to 229 is interaction with GRB2, ERI3 and SYN1; the sequence is KKRPKPGGWN…ESQAYYQRGS (207 aa). Positions 26 to 104 are disordered; that stretch reads PKPGGWNTGG…HNQWNKPSKP (79 aa). Tandem repeats lie at residues 51-58, 59-66, 67-74, 75-82, and 83-90. Positions 51–90 are 5 X 8 AA tandem repeats of P-H-G-G-G-W-G-Q; it reads PQGGGWGQPHGGGWGQPHGGGWGQPHGGGWGQPHGGGWGQ. Residues 52–92 show a composition bias toward gly residues; it reads QGGGWGQPHGGGWGQPHGGGWGQPHGGGWGQPHGGGWGQAG. Residues His-60, Gly-61, Gly-62, His-68, Gly-69, Gly-70, His-76, Gly-77, Gly-78, His-84, Gly-85, and Gly-86 each contribute to the Cu(2+) site. A disulfide bond links Cys-178 and Cys-213. 2 N-linked (GlcNAc...) asparagine glycosylation sites follow: Asn-180 and Asn-196. A lipid anchor (GPI-anchor amidated serine) is attached at Ser-229. Positions 230–252 are cleaved as a propeptide — removed in mature form; sequence SMVLFSSPPVILLISFLIFLIVG.

This sequence belongs to the prion family. As to quaternary structure, monomer and homodimer. Has a tendency to aggregate into amyloid fibrils containing a cross-beta spine, formed by a steric zipper of superposed beta-strands. Soluble oligomers may represent an intermediate stage on the path to fibril formation. Copper binding may promote oligomerization. Interacts with GRB2, APP, ERI3/PRNPIP and SYN1. Mislocalized cytosolically exposed PrP interacts with MGRN1; this interaction alters MGRN1 subcellular location and causes lysosomal enlargement. Interacts with KIAA1191.

It localises to the cell membrane. The protein localises to the golgi apparatus. Functionally, its primary physiological function is unclear. Has cytoprotective activity against internal or environmental stresses. May play a role in neuronal development and synaptic plasticity. May be required for neuronal myelin sheath maintenance. May play a role in iron uptake and iron homeostasis. Soluble oligomers are toxic to cultured neuroblastoma cells and induce apoptosis (in vitro). Association with GPC1 (via its heparan sulfate chains) targets PRNP to lipid rafts. Also provides Cu(2+) or Zn(2+) for the ascorbate-mediated GPC1 deaminase degradation of its heparan sulfate side chains. The chain is Major prion protein (PRNP) from Ateles paniscus (Black spider monkey).